The primary structure comprises 628 residues: Alpha-L-arabinofuranosidase A (628 aa).

The signal sequence occupies residues 1–25; sequence MVAFSALSGVSAVSLLLSLVQNAHG. N-linked (GlcNAc...) asparagine glycosylation is found at N36, N51, N74, N152, N171, N260, N359, N440, N493, and N610.

Belongs to the glycosyl hydrolase 51 family.

The catalysed reaction is Hydrolysis of terminal non-reducing alpha-L-arabinofuranoside residues in alpha-L-arabinosides.. The protein operates within glycan metabolism; L-arabinan degradation. Functionally, acts only on small linear 1,5-alpha-linked L-arabinofuranosyl oligosaccharides. This is Alpha-L-arabinofuranosidase A (abfA) from Aspergillus niger.